We begin with the raw amino-acid sequence, 254 residues long: Inner membrane protein YabI (254 aa).

At 1-7 the chain is on the periplasmic side; the sequence is MQALLEH. A run of 2 helical transmembrane segments spans residues 8–28 and 29–49; these read FITQSTVYSLMAVVLVAFLES and LALVGLILPGTVLMAGLGALI. At 50–58 the chain is on the periplasmic side; the sequence is GSGELSFWH. A helical membrane pass occupies residues 59–79; the sequence is AWLAGIIGCLMGDWISFWLGW. Topologically, residues 80-144 are cytoplasmic; it reads RFKKPLHRWS…LPVAKFITPN (65 aa). The chain crosses the membrane as a helical span at residues 145–165; the sequence is IIGCLLWPPFYFLPGILAGAA. Over 166 to 178 the chain is Periplasmic; sequence IDIPAGMQSGEFK. A helical transmembrane segment spans residues 179–199; sequence WLLLATAVFLWVGGWLCWRLW. Over 200-215 the chain is Cytoplasmic; that stretch reads RSGKATDRLSHYLSRG. A helical membrane pass occupies residues 216–236; the sequence is RLLWLTPLISAIGVVALVVLI. Topologically, residues 237-254 are periplasmic; sequence RHPLMPVYIDILRKVVGV.

The protein belongs to the DedA family.

The protein resides in the cell inner membrane. The chain is Inner membrane protein YabI (yabI) from Escherichia coli (strain K12).